The sequence spans 935 residues: MANRLQRGDRSRLLLLLCIFLGTLRGFRARQIRYSVPEETEKGSFVGNISKDLGLEPRELAKRGVRIVSRGKTQLFAVNPRSGSLITAGRIDREELCETVSSCFLNMELLVEDTLKIYGVEVEIIDINDNAPSFQEDEVEIKVSEHAIPGARFALPNARDPDVGVNSLQSYQLSPNNYFSLQLRGRTDGAKNPELVLEGSLDREKEAAHLLLLTALDGGDPIRKGAVPIRVVVLDVNDHIPMFTQSVYRVSVPENISSGTRVLMVNATDPDEGINGEVMYSFRNMESKASEIFQLDSQTGEVQVRGSLDFEKYRFYEMEIQGQDGGGLFTTTTMLITVVDVNDNAPEITITSSINSILENSPPGTVIALLNVQDQDSGENGQVSCFIPNHLPFKLEKTYGNYYKLITSRVLDRELVQSYNITLTATDQGSPPLSAETHIWLNVADDNDNPPVFPHSSYSAYIPENNPRGASIFSVTALDPDSKQNALVTYSLTDDTVQGVPLSSYVSINSNTGVLYALQSFDYEQFRDLQLRVIARDSGDPPLSSNVSLSLFVLDQNDNAPEILYPALPTDGSTGVELAPRSAEPGYLVTKVVAVDKDSGQNAWLSYRLLKASEPGLFAVGEHTGEVRTARALLDRDALKQSLVVAVQDHGQPPLSATVTLTVAVADSIPEVLADLGSLESLANSEASDLSLYLVVAVAAVSCIFLVFVIVLLALRLWRWHKSRLLQASEGGLAGMPTSHFVGVDGVQAFLQTYSHEVSLIADSQKSHLIFPQPNYGDTLISQESCEKSEPLLIAEDSAIILGKCDPTSNQQAPPNTDWRFSQAQRPGTSGSQNGDDTGTWPNNQFDTEMLQAMILASASEAADGSSTLGGGAGTMGLSARYGPQFTLQHVPDYRQNVYIPGSNATLTNAAGKRDGKAPAGGNGNKKKSGKKEKK.

Positions 1–29 are cleaved as a signal peptide; it reads MANRLQRGDRSRLLLLLCIFLGTLRGFRA. Cadherin domains follow at residues 30–134, 135–243, 244–348, 349–453, 454–563, and 571–677; these read RQIR…APSF, QEDE…IPMF, TQSV…APEI, TITS…PPVF, PHSS…APEI, and DGST…ADLG. At 30 to 693 the chain is on the extracellular side; that stretch reads RQIRYSVPEE…NSEASDLSLY (664 aa). Asn48 carries an N-linked (GlcNAc...) asparagine glycan. N-linked (GlcNAc...) asparagine glycans are attached at residues Asn255, Asn266, Asn420, and Asn546. A helical transmembrane segment spans residues 694–714; sequence LVVAVAAVSCIFLVFVIVLLA. Residues 715 to 935 lie on the Cytoplasmic side of the membrane; it reads LRLWRWHKSR…KKKSGKKEKK (221 aa). 2 disordered regions span residues 805-844 and 905-935; these read CDPT…WPNN and ATLT…KEKK. Positions 807 to 844 are enriched in polar residues; it reads PTSNQQAPPNTDWRFSQAQRPGTSGSQNGDDTGTWPNN. Residues 925 to 935 are compositionally biased toward basic residues; that stretch reads NKKKSGKKEKK.

Its subcellular location is the cell membrane. Functionally, potential calcium-dependent cell-adhesion protein. May be involved in the establishment and maintenance of specific neuronal connections in the brain. This Pan troglodytes (Chimpanzee) protein is Protocadherin gamma-A11 (PCDHGA11).